We begin with the raw amino-acid sequence, 304 residues long: Non-specific ribonucleoside hydrolase RihC (304 aa).

H233 is an active-site residue.

The protein belongs to the IUNH family. RihC subfamily.

Functionally, hydrolyzes both purine and pyrimidine ribonucleosides with a broad-substrate specificity. This chain is Non-specific ribonucleoside hydrolase RihC, found in Escherichia coli (strain 55989 / EAEC).